Reading from the N-terminus, the 281-residue chain is MQEALRLIFSDTRARPSADVEVPGFEADWSAATPSRGLPLTLRNLRKSFGDNSVLRGIDLHIPAGQFVTIVGRSGCGKSTLLRLIAGLDQPTAGNIGFGDDRLPGDVRVMFQEPRLLPWARVLANVEVGLGADRGSPDAKARAEEVLLEVGLTDKRDQWPAVLSGGQKQRVALARALVSRPRVLAFDEPLGALDALTRIAMQQLLERVWRDQGFTAILVTHDVAEAVALADRVLVIEDGRITNDVLIDLPRPRRRGSADLAALEGEILKQLLEGSEDSSEL.

The ABC transporter domain occupies 40 to 263; the sequence is LTLRNLRKSF…RRGSADLAAL (224 aa). 72–79 contacts ATP; it reads GRSGCGKS.

The protein belongs to the ABC transporter superfamily. Aliphatic sulfonates importer (TC 3.A.1.17.2) family. In terms of assembly, the complex is composed of two ATP-binding proteins (SsuB), two transmembrane proteins (SsuC) and a solute-binding protein (SsuA).

It is found in the cell inner membrane. The enzyme catalyses ATP + H2O + aliphatic sulfonate-[sulfonate-binding protein]Side 1 = ADP + phosphate + aliphatic sulfonateSide 2 + [sulfonate-binding protein]Side 1.. In terms of biological role, part of the ABC transporter complex SsuABC involved in aliphatic sulfonates import. Responsible for energy coupling to the transport system. The protein is Aliphatic sulfonates import ATP-binding protein SsuB of Rhodopseudomonas palustris (strain BisA53).